A 320-amino-acid polypeptide reads, in one-letter code: Cytochrome f (320 aa).

A signal peptide spans 1–35 (MQTRNAFSWLKKQITRSISVSLMIYILTRTSISSA). 4 residues coordinate heme: tyrosine 36, cysteine 56, cysteine 59, and histidine 60. The chain crosses the membrane as a helical span at residues 286–305 (VQGLLFFLASVILAQIFLVL).

It belongs to the cytochrome f family. The 4 large subunits of the cytochrome b6-f complex are cytochrome b6, subunit IV (17 kDa polypeptide, petD), cytochrome f and the Rieske protein, while the 4 small subunits are PetG, PetL, PetM and PetN. The complex functions as a dimer. It depends on heme as a cofactor.

The protein resides in the plastid. The protein localises to the chloroplast thylakoid membrane. Component of the cytochrome b6-f complex, which mediates electron transfer between photosystem II (PSII) and photosystem I (PSI), cyclic electron flow around PSI, and state transitions. The polypeptide is Cytochrome f (Atropa belladonna (Belladonna)).